The primary structure comprises 385 residues: Phosphate acyltransferase (385 aa).

A compositionally biased stretch (low complexity) spans 1–17 (MAAGTSIGTTPGGSTSP). The tract at residues 1-28 (MAAGTSIGTTPGGSTSPETPPEHGLTGT) is disordered.

The protein belongs to the PlsX family. In terms of assembly, homodimer. Probably interacts with PlsY.

Its subcellular location is the cytoplasm. It catalyses the reaction a fatty acyl-[ACP] + phosphate = an acyl phosphate + holo-[ACP]. It functions in the pathway lipid metabolism; phospholipid metabolism. Functionally, catalyzes the reversible formation of acyl-phosphate (acyl-PO(4)) from acyl-[acyl-carrier-protein] (acyl-ACP). This enzyme utilizes acyl-ACP as fatty acyl donor, but not acyl-CoA. This is Phosphate acyltransferase from Dinoroseobacter shibae (strain DSM 16493 / NCIMB 14021 / DFL 12).